A 288-amino-acid polypeptide reads, in one-letter code: Diaminopimelate epimerase (288 aa).

Positions 14 and 67 each coordinate substrate. Cys76 serves as the catalytic Proton donor. Residues 77-78, Asn166, Asn199, and 217-218 contribute to the substrate site; these read GN and ER. The active-site Proton acceptor is the Cys226. 227-228 lines the substrate pocket; that stretch reads GT.

This sequence belongs to the diaminopimelate epimerase family. Homodimer.

The protein localises to the cytoplasm. It catalyses the reaction (2S,6S)-2,6-diaminopimelate = meso-2,6-diaminopimelate. It functions in the pathway amino-acid biosynthesis; L-lysine biosynthesis via DAP pathway; DL-2,6-diaminopimelate from LL-2,6-diaminopimelate: step 1/1. Functionally, catalyzes the stereoinversion of LL-2,6-diaminopimelate (L,L-DAP) to meso-diaminopimelate (meso-DAP), a precursor of L-lysine and an essential component of the bacterial peptidoglycan. This is Diaminopimelate epimerase from Bacillus thuringiensis (strain Al Hakam).